A 311-amino-acid chain; its full sequence is VQ motif-containing protein 9 (311 aa).

Low complexity predominate over residues 1–27 (MDKSCNSSGDSSAVSASATSSTGNNTT). The interval 1–78 (MDKSCNSSGD…QINQGNLHQH (78 aa)) is disordered. A VQ motif is present at residues 90–99 (FRDVVQKLTG). Disordered stretches follow at residues 103–125 (HERISAPPQQPIHHPKPQQSSRL), 228–266 (QQENAPPSQHNSFPPPHPPPPSSAVSQTVPTSIPAPPLF), and 290–311 (GQLGFPVSPTTVPLPSPKYKGH). Over residues 240–249 (FPPPHPPPPS) the composition is skewed to pro residues. The segment covering 290-302 (GQLGFPVSPTTVP) has biased composition (low complexity).

As to quaternary structure, interacts (via N-terminus) with WRKY8. In terms of tissue distribution, highly expressed in roots and at lower levels in rosette leaves, cauline leaves, stems, flowers and siliques.

It localises to the nucleus. Functions as a negative regulator of salt stress response. Functions as a repressor of WRKY8 transcription factor by decreasing the DNA-binding activity of WRKY8 and acts antagonistically with WRKY8 to regulate sodium and potassium homeostasis under salt stress. This is VQ motif-containing protein 9 from Arabidopsis thaliana (Mouse-ear cress).